Reading from the N-terminus, the 95-residue chain is Aspartyl/glutamyl-tRNA(Asn/Gln) amidotransferase subunit C (95 aa).

It belongs to the GatC family. Heterotrimer of A, B and C subunits.

It catalyses the reaction L-glutamyl-tRNA(Gln) + L-glutamine + ATP + H2O = L-glutaminyl-tRNA(Gln) + L-glutamate + ADP + phosphate + H(+). The catalysed reaction is L-aspartyl-tRNA(Asn) + L-glutamine + ATP + H2O = L-asparaginyl-tRNA(Asn) + L-glutamate + ADP + phosphate + 2 H(+). Allows the formation of correctly charged Asn-tRNA(Asn) or Gln-tRNA(Gln) through the transamidation of misacylated Asp-tRNA(Asn) or Glu-tRNA(Gln) in organisms which lack either or both of asparaginyl-tRNA or glutaminyl-tRNA synthetases. The reaction takes place in the presence of glutamine and ATP through an activated phospho-Asp-tRNA(Asn) or phospho-Glu-tRNA(Gln). The sequence is that of Aspartyl/glutamyl-tRNA(Asn/Gln) amidotransferase subunit C from Acidiphilium cryptum (strain JF-5).